The chain runs to 509 residues: Transmembrane protein 104 homolog (509 aa).

Residues 1–19 lie on the Cytoplasmic side of the membrane; it reads MPRLVNGREAAPTYSNLVG. The chain crosses the membrane as a helical span at residues 20–40; the sequence is FIFIFNLIVGTGALTLPGVFA. The Extracellular portion of the chain corresponds to 41 to 45; the sequence is RAGWM. The chain crosses the membrane as a helical span at residues 46–66; that stretch reads LSLIVIVLLAIISYMTVTFII. Over 67 to 151 the chain is Cytoplasmic; it reads EAMACANAIR…ATLFFNEFGR (85 aa). Residues 152–172 traverse the membrane as a helical segment; the sequence is VMFYLCLIVYLYGDLSIYSAA. At 173-218 the chain is on the extracellular side; sequence VARSLRDVVCDQTNGTDTNNLMYWPGDFENNTSLACWKEHTISRLN. Asn-186, Asn-202, and Asn-203 each carry an N-linked (GlcNAc...) asparagine glycan. Residues 219-239 traverse the membrane as a helical segment; sequence MYRVLLIGFTLIFGPFVYFNV. Residues 240–248 are Cytoplasmic-facing; the sequence is QKTKYLQML. A helical transmembrane segment spans residues 249 to 269; the sequence is TAAFRWMAFTLMICISLKLLI. Residues 270–277 lie on the Extracellular side of the membrane; it reads SRGAKGHP. The chain crosses the membrane as a helical span at residues 278 to 298; it reads ATFNVYGIPSLFGACVYSFMC. Residues 299-320 are Cytoplasmic-facing; sequence HHSLPSLLAPIRHKSMVSKILS. The helical transmembrane segment at 321-341 threads the bilayer; sequence IDYIIICAFYILLAMTGIFAF. The Extracellular segment spans residues 342–361; the sequence is ERIEDLYTLDFLPYDVAYVD. Residues 362-382 traverse the membrane as a helical segment; it reads FWSGLLICIDYFLALFPIFTL. Residues 383-411 are Cytoplasmic-facing; sequence STSFPIVAITLKNNLQSLFLDMSQYESYS. The chain crosses the membrane as a helical span at residues 412-432; that stretch reads VILRLCFPLLAIIPPFCITYF. Topologically, residues 433–439 are extracellular; sequence TESLSSL. Residues 440–460 traverse the membrane as a helical segment; sequence VAFTGTYAGTGIQYIIPVFLV. Residues 461–487 lie on the Cytoplasmic side of the membrane; it reads YFARRTCSELLGSGVVNRFKSPFKSSA. A helical membrane pass occupies residues 488-508; the sequence is WLVFVFIWSILCVCLVSINLF. Position 509 (Ser-509) is a topological domain, extracellular.

Belongs to the TMEM104 family.

Its subcellular location is the membrane. The sequence is that of Transmembrane protein 104 homolog from Drosophila melanogaster (Fruit fly).